Reading from the N-terminus, the 20-residue chain is U1-poneritoxin-Ni1a (20 aa).

Lys-20 is subject to Lysine amide.

Belongs to the non-disulfide-bridged peptide (NDBP) superfamily. Medium-length antimicrobial peptide (group 3) family. Ponericin-W subfamily. As to expression, expressed by the venom gland.

The protein localises to the secreted. It localises to the target cell membrane. Has activity against Gram-positive bacteria. Has insecticidal and hemolytic activities. May act by disrupting the integrity of the bacterial cell membrane. The protein is U1-poneritoxin-Ni1a of Neoponera inversa (Ant).